We begin with the raw amino-acid sequence, 326 residues long: Protein TMED8 (326 aa).

The segment at 1–99 is disordered; that stretch reads MSDRQAAEGP…EGQAPGEQAA (99 aa). Positions 50-65 are enriched in low complexity; the sequence is SSPLASASDPAAESSP. The GOLD domain maps to 160–324; it reads PPCVWTFAKV…NKTLYFHIYY (165 aa). Position 170 is an N6-acetyllysine (K170). A disordered region spans residues 234–268; it reads VQVSDSSEDEEEEEDEEEEIEEPVPVGDVERGSRS. Over residues 239-255 the composition is skewed to acidic residues; that stretch reads SSEDEEEEEDEEEEIEE.

In Mus musculus (Mouse), this protein is Protein TMED8 (Tmed8).